Reading from the N-terminus, the 85-residue chain is Small ribosomal subunit protein uS17 (85 aa).

The protein belongs to the universal ribosomal protein uS17 family. As to quaternary structure, part of the 30S ribosomal subunit.

Functionally, one of the primary rRNA binding proteins, it binds specifically to the 5'-end of 16S ribosomal RNA. This chain is Small ribosomal subunit protein uS17, found in Mycoplasma genitalium (strain ATCC 33530 / DSM 19775 / NCTC 10195 / G37) (Mycoplasmoides genitalium).